The primary structure comprises 185 residues: Ribosome-recycling factor (185 aa).

This sequence belongs to the RRF family.

Its subcellular location is the cytoplasm. In terms of biological role, responsible for the release of ribosomes from messenger RNA at the termination of protein biosynthesis. May increase the efficiency of translation by recycling ribosomes from one round of translation to another. The polypeptide is Ribosome-recycling factor (Mycobacterium bovis (strain BCG / Pasteur 1173P2)).